The sequence spans 319 residues: NADH-quinone oxidoreductase subunit H 1 (319 aa).

8 helical membrane passes run 1–21, 74–94, 107–127, 147–167, 179–199, 238–258, 262–282, and 293–313; these read MIGL…LLVV, FAYI…FGVI, VGVL…VLGA, LAYE…AGSL, VWFV…GVAA, VLLV…GPWL, IWFG…RATL, and FAWK…GIVV.

It belongs to the complex I subunit 1 family. As to quaternary structure, NDH-1 is composed of 14 different subunits. Subunits NuoA, H, J, K, L, M, N constitute the membrane sector of the complex.

The protein resides in the cell inner membrane. It catalyses the reaction a quinone + NADH + 5 H(+)(in) = a quinol + NAD(+) + 4 H(+)(out). Functionally, NDH-1 shuttles electrons from NADH, via FMN and iron-sulfur (Fe-S) centers, to quinones in the respiratory chain. The immediate electron acceptor for the enzyme in this species is believed to be ubiquinone. Couples the redox reaction to proton translocation (for every two electrons transferred, four hydrogen ions are translocated across the cytoplasmic membrane), and thus conserves the redox energy in a proton gradient. This subunit may bind ubiquinone. This chain is NADH-quinone oxidoreductase subunit H 1, found in Rhodopseudomonas palustris (strain BisB5).